Reading from the N-terminus, the 469-residue chain is 3-isopropylmalate dehydratase large subunit (469 aa).

The [4Fe-4S] cluster site is built by Cys350, Cys410, and Cys413.

Belongs to the aconitase/IPM isomerase family. LeuC type 1 subfamily. In terms of assembly, heterodimer of LeuC and LeuD. Requires [4Fe-4S] cluster as cofactor.

The catalysed reaction is (2R,3S)-3-isopropylmalate = (2S)-2-isopropylmalate. Its pathway is amino-acid biosynthesis; L-leucine biosynthesis; L-leucine from 3-methyl-2-oxobutanoate: step 2/4. In terms of biological role, catalyzes the isomerization between 2-isopropylmalate and 3-isopropylmalate, via the formation of 2-isopropylmaleate. This is 3-isopropylmalate dehydratase large subunit from Rhizobium rhizogenes (strain K84 / ATCC BAA-868) (Agrobacterium radiobacter).